A 259-amino-acid polypeptide reads, in one-letter code: Heat-labile enterotoxin IIA, A chain (259 aa).

Positions 1–18 (MIKHVLLFFVFISFSVSA) are cleaved as a signal peptide. 23–37 (RADSRTPDEIRRAGG) lines the NAD(+) pocket. Residue Glu-128 is part of the active site. A disulfide bond links Cys-203 and Cys-215.

It belongs to the enterotoxin A family. Heterohexamer of one A chain and of five B chains.

The biological activity of the toxin is produced by the A chain, which activates intracellular adenyl cyclase. The sequence is that of Heat-labile enterotoxin IIA, A chain from Escherichia coli.